The sequence spans 354 residues: Holliday junction branch migration complex subunit RuvB (354 aa).

Residues 1 to 38 form a disordered region; the sequence is MSDFERTEFELPPGVGHSQNEDLNPQQTAGDSDIDTSL. The tract at residues 2–199 is large ATPase domain (RuvB-L); it reads SDFERTEFEL…FGFTAQMEFY (198 aa). Over residues 17 to 30 the composition is skewed to polar residues; it reads HSQNEDLNPQQTAG. Residues leucine 38, arginine 39, glycine 80, lysine 83, threonine 84, threonine 85, 146–148, arginine 189, tyrosine 199, and arginine 236 each bind ATP; that span reads EDF. Position 84 (threonine 84) interacts with Mg(2+). The tract at residues 200 to 270 is small ATPAse domain (RuvB-S); sequence DTADLTRVVT…VARAALLVFD (71 aa). The tract at residues 273-354 is head domain (RuvB-H); it reads ESGLDRLDRA…LEPPEGTIGL (82 aa). Residues arginine 328 and arginine 333 each coordinate DNA.

It belongs to the RuvB family. As to quaternary structure, homohexamer. Forms an RuvA(8)-RuvB(12)-Holliday junction (HJ) complex. HJ DNA is sandwiched between 2 RuvA tetramers; dsDNA enters through RuvA and exits via RuvB. An RuvB hexamer assembles on each DNA strand where it exits the tetramer. Each RuvB hexamer is contacted by two RuvA subunits (via domain III) on 2 adjacent RuvB subunits; this complex drives branch migration. In the full resolvosome a probable DNA-RuvA(4)-RuvB(12)-RuvC(2) complex forms which resolves the HJ.

Its subcellular location is the cytoplasm. The enzyme catalyses ATP + H2O = ADP + phosphate + H(+). Its function is as follows. The RuvA-RuvB-RuvC complex processes Holliday junction (HJ) DNA during genetic recombination and DNA repair, while the RuvA-RuvB complex plays an important role in the rescue of blocked DNA replication forks via replication fork reversal (RFR). RuvA specifically binds to HJ cruciform DNA, conferring on it an open structure. The RuvB hexamer acts as an ATP-dependent pump, pulling dsDNA into and through the RuvAB complex. RuvB forms 2 homohexamers on either side of HJ DNA bound by 1 or 2 RuvA tetramers; 4 subunits per hexamer contact DNA at a time. Coordinated motions by a converter formed by DNA-disengaged RuvB subunits stimulates ATP hydrolysis and nucleotide exchange. Immobilization of the converter enables RuvB to convert the ATP-contained energy into a lever motion, pulling 2 nucleotides of DNA out of the RuvA tetramer per ATP hydrolyzed, thus driving DNA branch migration. The RuvB motors rotate together with the DNA substrate, which together with the progressing nucleotide cycle form the mechanistic basis for DNA recombination by continuous HJ branch migration. Branch migration allows RuvC to scan DNA until it finds its consensus sequence, where it cleaves and resolves cruciform DNA. The polypeptide is Holliday junction branch migration complex subunit RuvB (Corynebacterium jeikeium (strain K411)).